Here is a 495-residue protein sequence, read N- to C-terminus: Lysine--tRNA ligase (495 aa).

Residues E406 and E413 each contribute to the Mg(2+) site.

Belongs to the class-II aminoacyl-tRNA synthetase family. As to quaternary structure, homodimer. Requires Mg(2+) as cofactor.

Its subcellular location is the cytoplasm. It carries out the reaction tRNA(Lys) + L-lysine + ATP = L-lysyl-tRNA(Lys) + AMP + diphosphate. This Leptospira interrogans serogroup Icterohaemorrhagiae serovar Lai (strain 56601) protein is Lysine--tRNA ligase.